We begin with the raw amino-acid sequence, 873 residues long: Cilia- and flagella-associated protein 58 (873 aa).

Coiled coils occupy residues 106–609 (VDSA…VISE) and 642–832 (ETQY…QKRK). The interval 202–221 (QEIQHRQNEASRESRKKEKL) is disordered. Residues 204-221 (IQHRQNEASRESRKKEKL) are compositionally biased toward basic and acidic residues.

Belongs to the CFAP58 family. Interacts with ODFP2. In terms of tissue distribution, predominantly expressed in the testis. Also found at lower levels in ciliated cells and tissues such as neural progenitor cells and oviducts.

The protein resides in the cell projection. Its subcellular location is the cilium. The protein localises to the flagellum. It localises to the cytoplasm. It is found in the cytoskeleton. The protein resides in the microtubule organizing center. Its subcellular location is the centrosome. Functionally, has an essential role in the assembly and organization of the sperm flagellar axoneme. Required for the elongation of the primary cilium and sperm flagellar midpiece via modulation of the Notch signaling pathway. The sequence is that of Cilia- and flagella-associated protein 58 from Mus musculus (Mouse).